A 265-amino-acid chain; its full sequence is Ribonuclease 3 (265 aa).

The RNase III domain occupies 34 to 157 (LAVLTRKLGY…LIGAIYLDSQ (124 aa)). Mg(2+) is bound at residue Glu-70. Residue Asp-74 is part of the active site. 2 residues coordinate Mg(2+): Asp-143 and Glu-146. The active site involves Glu-146. The region spanning 185 to 256 (DAKSRLQEWL…AELMINQLHK (72 aa)) is the DRBM domain.

This sequence belongs to the ribonuclease III family. As to quaternary structure, homodimer. Mg(2+) serves as cofactor.

It is found in the cytoplasm. The enzyme catalyses Endonucleolytic cleavage to 5'-phosphomonoester.. In terms of biological role, digests double-stranded RNA. Involved in the processing of primary rRNA transcript to yield the immediate precursors to the large and small rRNAs (23S and 16S). Processes some mRNAs, and tRNAs when they are encoded in the rRNA operon. Processes pre-crRNA and tracrRNA of type II CRISPR loci if present in the organism. This is Ribonuclease 3 from Psychrobacter arcticus (strain DSM 17307 / VKM B-2377 / 273-4).